We begin with the raw amino-acid sequence, 363 residues long: MSSESTVIKVTGKSAADNYDVVVGRGLLGRLPELLGERVKRVLVIHPRALRLTGDTVRDELASAGFTALTAEIPDAEEGKHIQVAAFCWQVLGQNDFTRSDAVVAVGGGAVTDLAGFVAATWLRGVKVIHMPTSLLGMVDASVGGKTGINTAEGKNLVGAFHPPAAVLADLDTLSTLPKNELISGMAEVIKCGFIADPAILDLVEKDPSAVTDPQSAFLRELIERAIAVKADVVSEDLKETGRREILNYGHTLGHAIELVERYSWRHGAAVSVGMMFAAELARSVGRLSDADADRHRTILETLGLPITYRRDRWQGLLDGMRRDKKSRGDLLRFVVLDGIARPGILDVPDTSLLFAAYQEIAS.

NAD(+)-binding positions include 75–80, 109–113, 133–134, Lys146, Lys155, and 173–176; these read DAEEGK, GAVTD, TS, and TLST. Residues Glu188, His251, and His267 each contribute to the Zn(2+) site.

This sequence belongs to the sugar phosphate cyclases superfamily. Dehydroquinate synthase family. The cofactor is Co(2+). Zn(2+) is required as a cofactor. It depends on NAD(+) as a cofactor.

The protein resides in the cytoplasm. It carries out the reaction 7-phospho-2-dehydro-3-deoxy-D-arabino-heptonate = 3-dehydroquinate + phosphate. The protein operates within metabolic intermediate biosynthesis; chorismate biosynthesis; chorismate from D-erythrose 4-phosphate and phosphoenolpyruvate: step 2/7. Catalyzes the conversion of 3-deoxy-D-arabino-heptulosonate 7-phosphate (DAHP) to dehydroquinate (DHQ). This is 3-dehydroquinate synthase from Arthrobacter sp. (strain FB24).